Consider the following 143-residue polypeptide: Actinoxanthin (143 aa).

The first 33 residues, 1–33 (MSLRHMSRRASRFGVVAVASIGLAAAAQSVAFA), serve as a signal peptide directing secretion. 2 disulfides stabilise this stretch: C69-C78 and C119-C124.

The protein belongs to the neocarzinostatin family.

Binds non-covalently to a chromophore which is the cytotoxic and mutagenic component of the antibiotic. The chromophore binds to DNA as a weak intercalator and causes single- and double-strand breaks. The chain is Actinoxanthin (axnA) from Streptomyces globisporus.